We begin with the raw amino-acid sequence, 51 residues long: Large ribosomal subunit protein eL39 (51 aa).

It belongs to the eukaryotic ribosomal protein eL39 family.

This chain is Large ribosomal subunit protein eL39 (rpl39e), found in Pyrococcus horikoshii (strain ATCC 700860 / DSM 12428 / JCM 9974 / NBRC 100139 / OT-3).